The following is a 572-amino-acid chain: Hemagglutinin-neuraminidase (572 aa).

Residues 1 to 31 (MEYWKHTNHGKDAGNELETSMATHGNKITNK) are Intravirion-facing. The helical transmembrane segment at 32–52 (ITYILWTIILVLLSIVFIIVL) threads the bilayer. Topologically, residues 53 to 572 (INSIKSEKAH…FKTEIPKSCS (520 aa)) are virion surface. Disulfide bonds link Cys190-Cys214 and Cys256-Cys269. An involved in neuraminidase activity region spans residues 252–257 (NRKSCS). N-linked (GlcNAc...) asparagine; by host glycans are attached at residues Asn308 and Asn351. 2 cysteine pairs are disulfide-bonded: Cys355-Cys469 and Cys463-Cys473. Residue Asn523 is glycosylated (N-linked (GlcNAc...) asparagine; by host). Cysteines 535 and 544 form a disulfide.

It belongs to the paramyxoviruses hemagglutinin-neuraminidase family. Homotetramer; composed of disulfide-linked homodimers. Interacts with F protein trimer.

It is found in the virion membrane. Its subcellular location is the host cell membrane. The catalysed reaction is Hydrolysis of alpha-(2-&gt;3)-, alpha-(2-&gt;6)-, alpha-(2-&gt;8)- glycosidic linkages of terminal sialic acid residues in oligosaccharides, glycoproteins, glycolipids, colominic acid and synthetic substrates.. Its function is as follows. Attaches the virus to sialic acid-containing cell receptors and thereby initiating infection. Binding of HN protein to the receptor induces a conformational change that allows the F protein to trigger virion/cell membranes fusion. Functionally, neuraminidase activity ensures the efficient spread of the virus by dissociating the mature virions from the neuraminic acid containing glycoproteins. In Human parainfluenza 3 virus (strain Wash/47885/57) (HPIV-3), this protein is Hemagglutinin-neuraminidase (HN).